Consider the following 428-residue polypeptide: Maltoporin (428 aa).

The signal sequence occupies residues 1-24 (MKSMRILPISLTIMAGLLSIEASA).

Belongs to the porin LamB (TC 1.B.3) family. As to quaternary structure, homotrimer formed of three 18-stranded antiparallel beta-barrels, containing three independent channels.

The protein resides in the cell outer membrane. It carries out the reaction beta-maltose(in) = beta-maltose(out). Functionally, involved in the transport of maltose and maltodextrins. This Photorhabdus laumondii subsp. laumondii (strain DSM 15139 / CIP 105565 / TT01) (Photorhabdus luminescens subsp. laumondii) protein is Maltoporin.